The chain runs to 461 residues: Cysteine--tRNA ligase (461 aa).

C28 serves as a coordination point for Zn(2+). Positions 30 to 40 match the 'HIGH' region motif; sequence ITVYDLCHIGH. Zn(2+) contacts are provided by C209, H234, and E238. Positions 266 to 270 match the 'KMSKS' region motif; it reads KMSKS. Residue K269 participates in ATP binding.

This sequence belongs to the class-I aminoacyl-tRNA synthetase family. In terms of assembly, monomer. It depends on Zn(2+) as a cofactor.

It is found in the cytoplasm. The enzyme catalyses tRNA(Cys) + L-cysteine + ATP = L-cysteinyl-tRNA(Cys) + AMP + diphosphate. The chain is Cysteine--tRNA ligase from Escherichia coli O6:K15:H31 (strain 536 / UPEC).